We begin with the raw amino-acid sequence, 139 residues long: Thioredoxin-like protein Clot (139 aa).

Residues methionine 1–asparagine 136 enclose the Thioredoxin domain. Catalysis depends on nucleophile residues cysteine 49 and cysteine 52. Cysteine 49 and cysteine 52 form a disulfide bridge.

The protein belongs to the thioredoxin family.

Probable thiol-disulfide oxidoreductase that may participate in various redox reactions. The protein is Thioredoxin-like protein Clot of Oryza sativa subsp. japonica (Rice).